Here is a 291-residue protein sequence, read N- to C-terminus: ATP synthase gamma chain (291 aa).

Belongs to the ATPase gamma chain family. F-type ATPases have 2 components, CF(1) - the catalytic core - and CF(0) - the membrane proton channel. CF(1) has five subunits: alpha(3), beta(3), gamma(1), delta(1), epsilon(1). CF(0) has three main subunits: a, b and c.

It is found in the cell inner membrane. Produces ATP from ADP in the presence of a proton gradient across the membrane. The gamma chain is believed to be important in regulating ATPase activity and the flow of protons through the CF(0) complex. This is ATP synthase gamma chain from Burkholderia cenocepacia (strain ATCC BAA-245 / DSM 16553 / LMG 16656 / NCTC 13227 / J2315 / CF5610) (Burkholderia cepacia (strain J2315)).